Consider the following 659-residue polypeptide: Delta(6)-protoilludene synthase (659 aa).

Mg(2+)-binding residues include aspartate 91, asparagine 227, serine 231, and glutamate 235. Positions 91-95 match the DDXXD motif motif; sequence DEHTD. (2E,6E)-farnesyl diphosphate-binding residues include arginine 316 and tyrosine 317. The tract at residues 528–586 is disordered; the sequence is PQFSKTSGAPNGAHTPTTTNGSIKSNGFVSGDTNGHANGNGHVQTRSSTPSSSSSSTSS. Residues 530–573 show a composition bias toward polar residues; the sequence is FSKTSGAPNGAHTPTTTNGSIKSNGFVSGDTNGHANGNGHVQTR. Positions 574–586 are enriched in low complexity; sequence SSTPSSSSSSTSS.

Belongs to the terpene synthase family. Mg(2+) serves as cofactor.

The catalysed reaction is (2E,6E)-farnesyl diphosphate = Delta(6)-protoilludene + diphosphate. Its function is as follows. Terpene cyclase that catalyzes the cyclization of farnesyl diphosphate (FPP) to delta(6)-protoilludene. This is Delta(6)-protoilludene synthase from Cyclocybe aegerita (Black poplar mushroom).